The following is a 281-amino-acid chain: Pantothenate synthetase (281 aa).

30–37 (MGNLHQGH) lines the ATP pocket. The active-site Proton donor is histidine 37. Glutamine 61 contributes to the (R)-pantoate binding site. Glutamine 61 serves as a coordination point for beta-alanine. 149–152 (GNKD) is an ATP binding site. Position 155 (glutamine 155) interacts with (R)-pantoate. ATP contacts are provided by residues isoleucine 178 and 186 to 189 (MSSR).

It belongs to the pantothenate synthetase family. In terms of assembly, homodimer.

The protein localises to the cytoplasm. It catalyses the reaction (R)-pantoate + beta-alanine + ATP = (R)-pantothenate + AMP + diphosphate + H(+). Its pathway is cofactor biosynthesis; (R)-pantothenate biosynthesis; (R)-pantothenate from (R)-pantoate and beta-alanine: step 1/1. In terms of biological role, catalyzes the condensation of pantoate with beta-alanine in an ATP-dependent reaction via a pantoyl-adenylate intermediate. The sequence is that of Pantothenate synthetase from Shewanella baltica (strain OS195).